A 22-amino-acid polypeptide reads, in one-letter code: Pectinesterase (22 aa).

The active-site Proton donor is the Asp-6. Substrate is bound by residues Arg-19 and Trp-21.

This sequence belongs to the pectinesterase family.

The protein localises to the secreted. It is found in the cell wall. It carries out the reaction [(1-&gt;4)-alpha-D-galacturonosyl methyl ester](n) + n H2O = [(1-&gt;4)-alpha-D-galacturonosyl](n) + n methanol + n H(+). It participates in glycan metabolism; pectin degradation; 2-dehydro-3-deoxy-D-gluconate from pectin: step 1/5. The sequence is that of Pectinesterase from Capsicum chinense (Scotch bonnet).